The chain runs to 408 residues: MIVRHLSLGDFRNYTRADVALLPGATLFVGSNGQGKTNLVEALGFLSTLGSHRVSTDQALVRQGAESAVIRALLQHAGRELRVEVQINRSAANRAQVNGTATKTRELPRYFSSVLFAPEDLALVRGDPSGRRRLLDQLLVLRTPRLAGVLSDYDRALKQRNTLLKSARARGMKADQLSTLDIWDERLVAIGSQIIAARGALVESLQPELARAYLAVAGSDHGPSARPELSILADDPGEDDVADETGARDGGRFTRTEDVVPVFTAAIARMRPRELERGLTLVGPHRDDVLFRLNGLPAKGYASHGESWSFALAIKLASAELLRRDSQTGDPVLILDDVFAELDQARRGRLAEAVTGFEQVLITAAVFEDVPEHLAANAVHIRAGAIVESPTPASASEPASPGEDGGAA.

30 to 37 (GSNGQGKT) is an ATP binding site. Disordered stretches follow at residues 220 to 252 (DHGP…DGGR) and 389 to 408 (SPTP…GGAA). Residues 389–402 (SPTPASASEPASPG) show a composition bias toward low complexity.

This sequence belongs to the RecF family.

The protein resides in the cytoplasm. The RecF protein is involved in DNA metabolism; it is required for DNA replication and normal SOS inducibility. RecF binds preferentially to single-stranded, linear DNA. It also seems to bind ATP. The chain is DNA replication and repair protein RecF from Clavibacter sepedonicus (Clavibacter michiganensis subsp. sepedonicus).